Here is a 227-residue protein sequence, read N- to C-terminus: 2-C-methyl-D-erythritol 4-phosphate cytidylyltransferase (227 aa).

Belongs to the IspD/TarI cytidylyltransferase family. IspD subfamily.

It carries out the reaction 2-C-methyl-D-erythritol 4-phosphate + CTP + H(+) = 4-CDP-2-C-methyl-D-erythritol + diphosphate. It participates in isoprenoid biosynthesis; isopentenyl diphosphate biosynthesis via DXP pathway; isopentenyl diphosphate from 1-deoxy-D-xylulose 5-phosphate: step 2/6. Functionally, catalyzes the formation of 4-diphosphocytidyl-2-C-methyl-D-erythritol from CTP and 2-C-methyl-D-erythritol 4-phosphate (MEP). This is 2-C-methyl-D-erythritol 4-phosphate cytidylyltransferase from Petrotoga mobilis (strain DSM 10674 / SJ95).